Here is a 195-residue protein sequence, read N- to C-terminus: Protein GrpE (195 aa).

The segment at 1–60 (MAKDEEKNSQASAAPNEGEVKAKQEQTSAKEPAAKAGETEKVADLQKQVEELTKQLDDQK) is disordered. A compositionally biased stretch (basic and acidic residues) spans 37-60 (GETEKVADLQKQVEELTKQLDDQK).

The protein belongs to the GrpE family. As to quaternary structure, homodimer.

It localises to the cytoplasm. Participates actively in the response to hyperosmotic and heat shock by preventing the aggregation of stress-denatured proteins, in association with DnaK and GrpE. It is the nucleotide exchange factor for DnaK and may function as a thermosensor. Unfolded proteins bind initially to DnaJ; upon interaction with the DnaJ-bound protein, DnaK hydrolyzes its bound ATP, resulting in the formation of a stable complex. GrpE releases ADP from DnaK; ATP binding to DnaK triggers the release of the substrate protein, thus completing the reaction cycle. Several rounds of ATP-dependent interactions between DnaJ, DnaK and GrpE are required for fully efficient folding. The chain is Protein GrpE from Limosilactobacillus fermentum (strain NBRC 3956 / LMG 18251) (Lactobacillus fermentum).